Here is a 466-residue protein sequence, read N- to C-terminus: Zinc finger protein ZIC 3 (466 aa).

A compositionally biased stretch (polar residues) spans 65–80; that stretch reads DLSSGQSSAFTPQGSG. The tract at residues 65–103 is disordered; it reads DLSSGQSSAFTPQGSGYANALGHHHHHHHHHHASQVPTY. Over residues 86–97 the composition is skewed to basic residues; sequence GHHHHHHHHHHA. Lys-247 is covalently cross-linked (Glycyl lysine isopeptide (Lys-Gly) (interchain with G-Cter in SUMO2)). A C2H2-type 1; atypical zinc finger spans residues 250–285; it reads LSCKWIEEAQLSRPKKSCDRTFSTMHELVTHVTMEH. The segment at 294 to 321 adopts a C2H2-type 2; atypical zinc-finger fold; it reads HVCYWEECPREGKSFKAKYKLVNHIRVH. Short sequence motifs (nuclear localization signal) lie at residues 296–321 and 329–351; these read CYWE…IRVH and CPFP…KRTH. 3 C2H2-type zinc fingers span residues 327–351, 357–381, and 387–409; these read FPCP…KRTH, FKCE…MHVH, and YICK…MKVH. Residues 403–466 are disordered; it reads RKHMKVHESQ…LPPNFNEWYV (64 aa). The span at 411 to 427 shows a compositional bias: low complexity; that stretch reads SQGSDSSPAASSGYESS. Positions 434–454 are enriched in polar residues; that stretch reads SANSKDTTKTPSAVQTSTSHN.

The protein belongs to the GLI C2H2-type zinc-finger protein family. Interacts with KPNA1 and KPNA6. Interacts (via C2H2-type domains 3, 4 and 5) with GLI3; the interaction enhances its transcriptional activity. Interacts (via the C2H2-type domains 3, 4 and 5) with MDFIC (via the C2H2-type domains 3, 4 and 5); the interaction reduces its transcriptional activity. In terms of tissue distribution, CNS. A high level expression is seen in the cerebellum.

The protein resides in the nucleus. It is found in the cytoplasm. Acts as a transcriptional activator. Required in the earliest stages in both axial midline development and left-right (LR) asymmetry specification. Binds to the minimal GLI-consensus sequence 5'-GGGTGGTC-3'. The polypeptide is Zinc finger protein ZIC 3 (Zic3) (Mus musculus (Mouse)).